We begin with the raw amino-acid sequence, 165 residues long: Lipoprotein signal peptidase (165 aa).

The next 2 membrane-spanning stretches (helical) occupy residues tryptophan 66–threonine 86 and asparagine 91–valine 111. Active-site residues include aspartate 121 and aspartate 139. Residues tryptophan 132–alanine 152 form a helical membrane-spanning segment.

Belongs to the peptidase A8 family.

The protein resides in the cell inner membrane. The catalysed reaction is Release of signal peptides from bacterial membrane prolipoproteins. Hydrolyzes -Xaa-Yaa-Zaa-|-(S,diacylglyceryl)Cys-, in which Xaa is hydrophobic (preferably Leu), and Yaa (Ala or Ser) and Zaa (Gly or Ala) have small, neutral side chains.. Its pathway is protein modification; lipoprotein biosynthesis (signal peptide cleavage). This protein specifically catalyzes the removal of signal peptides from prolipoproteins. The chain is Lipoprotein signal peptidase from Nitratidesulfovibrio vulgaris (strain DP4) (Desulfovibrio vulgaris).